The primary structure comprises 370 residues: MSTKELYIGVMSGTSMDGVDCALVEFDQEQVRLIAHSDYPMPADLRQKLLSVCTGQATNLKQIGELDHRLGHLFADAVMDLLSQAGVDTSQIRAIGNHGQTVFHQPNGEFPFTTQLGDANIIATRTNIDTVADFRRKDMALGGQGAPLVPAFHQSVFALQDSTTVVLNIGGIANISVLHPTRPVLGYDTGPGNMLMDAWCETHTQQNYDKDARFALQGEVNEALLNTLLQEPYLHQDAPKSTGRELFNMEWLTAKLQGQNYRSEDVQRTLCEYTALTISKEVERFRYGPTPQLLVCGGGARNPLLMQRLQQQLSHWQVSTTDAKGVSGDYMEAMAFAWLAYRHLHRLPSNLPEVTGASRLASLGVLYSKA.

13–20 (GTSMDGVD) contributes to the ATP binding site.

The protein belongs to the anhydro-N-acetylmuramic acid kinase family.

It catalyses the reaction 1,6-anhydro-N-acetyl-beta-muramate + ATP + H2O = N-acetyl-D-muramate 6-phosphate + ADP + H(+). It functions in the pathway amino-sugar metabolism; 1,6-anhydro-N-acetylmuramate degradation. It participates in cell wall biogenesis; peptidoglycan recycling. In terms of biological role, catalyzes the specific phosphorylation of 1,6-anhydro-N-acetylmuramic acid (anhMurNAc) with the simultaneous cleavage of the 1,6-anhydro ring, generating MurNAc-6-P. Is required for the utilization of anhMurNAc either imported from the medium or derived from its own cell wall murein, and thus plays a role in cell wall recycling. The polypeptide is Anhydro-N-acetylmuramic acid kinase (Vibrio vulnificus (strain CMCP6)).